We begin with the raw amino-acid sequence, 286 residues long: Penicillin-insensitive murein endopeptidase (286 aa).

Positions Met-1 to Ala-22 are cleaved as a signal peptide. Zn(2+) contacts are provided by His-117, His-120, Asp-127, Asp-152, and His-218.

It belongs to the peptidase M74 family. Zn(2+) is required as a cofactor.

It localises to the periplasm. Functionally, murein endopeptidase that cleaves the D-alanyl-meso-2,6-diamino-pimelyl amide bond that connects peptidoglycan strands. Likely plays a role in the removal of murein from the sacculus. This Haemophilus influenzae (strain ATCC 51907 / DSM 11121 / KW20 / Rd) protein is Penicillin-insensitive murein endopeptidase (mepA).